The following is a 510-amino-acid chain: ATP synthase subunit alpha (510 aa).

170–177 (GDRQTGKT) provides a ligand contact to ATP.

The protein belongs to the ATPase alpha/beta chains family. As to quaternary structure, F-type ATPases have 2 components, CF(1) - the catalytic core - and CF(0) - the membrane proton channel. CF(1) has five subunits: alpha(3), beta(3), gamma(1), delta(1), epsilon(1). CF(0) has three main subunits: a(1), b(2) and c(9-12). The alpha and beta chains form an alternating ring which encloses part of the gamma chain. CF(1) is attached to CF(0) by a central stalk formed by the gamma and epsilon chains, while a peripheral stalk is formed by the delta and b chains.

It is found in the cell inner membrane. It carries out the reaction ATP + H2O + 4 H(+)(in) = ADP + phosphate + 5 H(+)(out). In terms of biological role, produces ATP from ADP in the presence of a proton gradient across the membrane. The alpha chain is a regulatory subunit. This Maricaulis maris (strain MCS10) (Caulobacter maris) protein is ATP synthase subunit alpha.